Reading from the N-terminus, the 352-residue chain is MQVSDFHFELPDELIARYPKAERTASRLLQLDGNSGQLVDGTFKDVLELVEPGDLLVFNNTRVIPARMFGRKASGGKLEVLVERMLDEHTILAHVRSSKPPKPGTELYLGENDEFHAVMQARHDALFEIRFTAETVVLDILNQIGHMPLPPYIDRPDEETDKERYQTVYNQKPGAVAAPTAGLHFDQALLEQIQAKGVELAYVTLHVGAGTFQPVRVENIHDHHMHAEYVEVPQEVVDAIAATKARGGRVVAVGTTSVRSLESAAQDALQKGTELKPFFGDTEIFIFPGYQYQLVDCLITNFHLPESTLIMLVSAFAGYEHTMAAYEHAVKEQYRFFSYGDAMFIRKQTTKA.

Belongs to the QueA family. As to quaternary structure, monomer.

The protein localises to the cytoplasm. It catalyses the reaction 7-aminomethyl-7-carbaguanosine(34) in tRNA + S-adenosyl-L-methionine = epoxyqueuosine(34) in tRNA + adenine + L-methionine + 2 H(+). The protein operates within tRNA modification; tRNA-queuosine biosynthesis. Transfers and isomerizes the ribose moiety from AdoMet to the 7-aminomethyl group of 7-deazaguanine (preQ1-tRNA) to give epoxyqueuosine (oQ-tRNA). The sequence is that of S-adenosylmethionine:tRNA ribosyltransferase-isomerase from Vibrio cholerae serotype O1 (strain ATCC 39541 / Classical Ogawa 395 / O395).